We begin with the raw amino-acid sequence, 135 residues long: Small ribosomal subunit protein uS11 (135 aa).

It belongs to the universal ribosomal protein uS11 family. Part of the 30S ribosomal subunit. Interacts with proteins S7 and S18. Binds to IF-3.

Located on the platform of the 30S subunit, it bridges several disparate RNA helices of the 16S rRNA. Forms part of the Shine-Dalgarno cleft in the 70S ribosome. The polypeptide is Small ribosomal subunit protein uS11 (Protochlamydia amoebophila (strain UWE25)).